We begin with the raw amino-acid sequence, 113 residues long: Protein CTLA-2-beta (113 aa).

2 tandem repeats follow at residues 15–17 (EWK) and 18–20 (EWK). The interval 15–20 (EWKEWK) is 2 X 3 AA tandem repeats of E-W-K.

This sequence to the propeptide regions of cysteine proteases.

Not known, expressed in activated T-cell. This is Protein CTLA-2-beta (Ctla2b) from Mus musculus (Mouse).